The chain runs to 222 residues: Type II restriction enzyme AbrI (222 aa).

Disordered regions lie at residues glycine 21 to arginine 45 and asparagine 161 to isoleucine 222. The span at asparagine 22 to arginine 42 shows a compositional bias: basic and acidic residues. A compositionally biased stretch (low complexity) spans serine 188–proline 202.

This sequence belongs to the XhoI type II restriction endonuclease family.

It catalyses the reaction Endonucleolytic cleavage of DNA to give specific double-stranded fragments with terminal 5'-phosphates.. Its function is as follows. A P subtype restriction enzyme that recognizes the double-stranded sequence 5'-CTCGAG-3' and cleaves after C-1. This Azospirillum brasilense protein is Type II restriction enzyme AbrI (abrIR).